The chain runs to 789 residues: SWI5-dependent HO expression protein 4 (789 aa).

Serine 18 is subject to Phosphoserine.

The protein localises to the cytoplasm. Its function is as follows. Required for mother cell-specific ho expression. Might be required for the transport of factors (such as ASH1) that promote HO repression from the mother cell into its bud. This chain is SWI5-dependent HO expression protein 4 (SHE4), found in Saccharomyces cerevisiae (strain ATCC 204508 / S288c) (Baker's yeast).